A 411-amino-acid polypeptide reads, in one-letter code: Replication factor C subunit 2 (411 aa).

Residues 1–36 (MADFFNLKARQQAAAQASSSKTPTSKQESNRLQPWV) are disordered. Residues 11-27 (QQAAAQASSSKTPTSKQ) are compositionally biased toward low complexity. Residues Val36, Arg40, 73-81 (GPPGTGKTS), Asn195, and Arg253 each bind ATP.

It belongs to the activator 1 small subunits family. Heteropentamer of subunits RFC1, RFC2, RFC3, RFC4 and RFC5 that forms a complex with PCNA in the presence of ATP.

It localises to the nucleus. In terms of biological role, the elongation of primed DNA templates by DNA polymerase delta and epsilon requires the action of the accessory proteins proliferating cell nuclear antigen (PCNA) and activator 1. Subunit 2 binds ATP and single-stranded DNA. This Phaeosphaeria nodorum (strain SN15 / ATCC MYA-4574 / FGSC 10173) (Glume blotch fungus) protein is Replication factor C subunit 2 (RFC2).